The chain runs to 146 residues: Angiogenin (146 aa).

The first 24 residues, 1 to 24 (MVMGLGLFLLVFMLGLGLTPPTLA), serve as a signal peptide directing secretion. A Pyrrolidone carboxylic acid modification is found at Gln-25. Residue His-37 is the Proton acceptor of the active site. TRNA is bound at residue Arg-45. Cystine bridges form between Cys-50–Cys-105, Cys-63–Cys-116, and Cys-81–Cys-131. A Nucleolar localization signal motif is present at residues 55-59 (RRRGL). Residues Cys-105 and Ile-127 each coordinate tRNA. The active-site Proton donor is the His-138.

It belongs to the pancreatic ribonuclease family. In terms of assembly, homodimer. Interacts with RNH1; inhibiting ANG ribonuclease activity. Interacts with PCNA.

Its subcellular location is the secreted. The protein resides in the nucleus. It localises to the nucleolus. It is found in the cytoplasm. The protein localises to the stress granule. Has weak tRNA ribonuclease activity by itself due to partial autoinhibition by its C-terminus, which folds into a short alpha-helix that partially occludes the substrate-binding site. In absence of stress, the ribonuclease activity is inhibited by RNH1 in the cytoplasm. In response to stress, dissociates from RNH1 in the cytoplasm and associates with cytoplasmic ribosomes with vacant A-sites: ribosomes directly activate the tRNA ribonuclease activity of ANG by refolding the C-terminal alpha-helix. In response to stress, the angiogenic activity of ANG is inhibited by RNH1 in the nucleus. Secreted ribonuclease that can either promote or restrict cell proliferation of target cells, depending on the context. Endocytosed in target cells via its receptor PLXNB2 and translocates to the cytoplasm or nucleus. Under stress conditions, localizes to the cytoplasm and promotes the assembly of stress granules (SGs): specifically cleaves a subset of tRNAs within anticodon loops to produce tRNA-derived stress-induced fragments (tiRNAs), resulting in translation repression and inhibition of cell proliferation. tiRNas also prevent formation of apoptosome, thereby promoting cell survival. Preferentially cleaves RNAs between a pyrimidine and an adenosine residue, suggesting that it cleaves the anticodon loop of tRNA(Ala) (32-UUAGCAU-38) after positions 33 and 36. Cleaves a subset of tRNAs, including tRNA(Ala), tRNA(Glu), tRNA(Gly), tRNA(Lys), tRNA(Val), tRNA(His), tRNA(Asp) and tRNA(Sec). Under growth conditions and in differentiated cells, translocates to the nucleus and stimulates ribosomal RNA (rRNA) transcription, including that containing the initiation site sequences of 45S rRNA, thereby promoting cell growth and proliferation. Angiogenin induces vascularization of normal and malignant tissues via its ability to promote rRNA transcription. Involved in hematopoietic stem and progenitor cell (HSPC) growth and survival by promoting rRNA transcription in growth conditions and inhibiting translation in response to stress, respectively. Mediates the crosstalk between myeloid and intestinal epithelial cells to protect the intestinal epithelial barrier integrity: secreted by myeloid cells and promotes intestinal epithelial cells proliferation and survival. Also mediates osteoclast-endothelial cell crosstalk in growing bone: produced by osteoclasts and protects the neighboring vascular cells against senescence by promoting rRNA transcription. The chain is Angiogenin (ANG) from Trachypithecus francoisi (Francois' leaf monkey).